A 267-amino-acid polypeptide reads, in one-letter code: 4-hydroxy-tetrahydrodipicolinate reductase (267 aa).

Residues 9 to 14 (GAAGRM) and Asp35 contribute to the NAD(+) site. Arg36 contributes to the NADP(+) binding site. NAD(+) contacts are provided by residues 99-101 (GTT) and 123-126 (APNY). Catalysis depends on His156, which acts as the Proton donor/acceptor. His157 serves as a coordination point for (S)-2,3,4,5-tetrahydrodipicolinate. Residue Lys160 is the Proton donor of the active site. (S)-2,3,4,5-tetrahydrodipicolinate is bound at residue 166-167 (GT).

The protein belongs to the DapB family.

The protein resides in the cytoplasm. The enzyme catalyses (S)-2,3,4,5-tetrahydrodipicolinate + NAD(+) + H2O = (2S,4S)-4-hydroxy-2,3,4,5-tetrahydrodipicolinate + NADH + H(+). It catalyses the reaction (S)-2,3,4,5-tetrahydrodipicolinate + NADP(+) + H2O = (2S,4S)-4-hydroxy-2,3,4,5-tetrahydrodipicolinate + NADPH + H(+). It functions in the pathway amino-acid biosynthesis; L-lysine biosynthesis via DAP pathway; (S)-tetrahydrodipicolinate from L-aspartate: step 4/4. In terms of biological role, catalyzes the conversion of 4-hydroxy-tetrahydrodipicolinate (HTPA) to tetrahydrodipicolinate. This is 4-hydroxy-tetrahydrodipicolinate reductase from Alkalilimnicola ehrlichii (strain ATCC BAA-1101 / DSM 17681 / MLHE-1).